A 567-amino-acid polypeptide reads, in one-letter code: Urease subunit alpha (567 aa).

Positions 129 to 567 (GGIDTHIHFI…LPMAQRYFLF (439 aa)) constitute a Urease domain. H134, H136, and K217 together coordinate Ni(2+). An N6-carboxylysine modification is found at K217. Residue H219 coordinates substrate. The Ni(2+) site is built by H246 and H272. H320 functions as the Proton donor in the catalytic mechanism. Residue D360 participates in Ni(2+) binding.

This sequence belongs to the metallo-dependent hydrolases superfamily. Urease alpha subunit family. In terms of assembly, heterotrimer of UreA (gamma), UreB (beta) and UreC (alpha) subunits. Three heterotrimers associate to form the active enzyme. Ni cation is required as a cofactor. Carboxylation allows a single lysine to coordinate two nickel ions.

It localises to the cytoplasm. It catalyses the reaction urea + 2 H2O + H(+) = hydrogencarbonate + 2 NH4(+). The protein operates within nitrogen metabolism; urea degradation; CO(2) and NH(3) from urea (urease route): step 1/1. This chain is Urease subunit alpha, found in Delftia acidovorans (strain DSM 14801 / SPH-1).